The following is a 487-amino-acid chain: Aspartyl/glutamyl-tRNA(Asn/Gln) amidotransferase subunit B (487 aa).

Belongs to the GatB/GatE family. GatB subfamily. Heterotrimer of A, B and C subunits.

It carries out the reaction L-glutamyl-tRNA(Gln) + L-glutamine + ATP + H2O = L-glutaminyl-tRNA(Gln) + L-glutamate + ADP + phosphate + H(+). The catalysed reaction is L-aspartyl-tRNA(Asn) + L-glutamine + ATP + H2O = L-asparaginyl-tRNA(Asn) + L-glutamate + ADP + phosphate + 2 H(+). Its function is as follows. Allows the formation of correctly charged Asn-tRNA(Asn) or Gln-tRNA(Gln) through the transamidation of misacylated Asp-tRNA(Asn) or Glu-tRNA(Gln) in organisms which lack either or both of asparaginyl-tRNA or glutaminyl-tRNA synthetases. The reaction takes place in the presence of glutamine and ATP through an activated phospho-Asp-tRNA(Asn) or phospho-Glu-tRNA(Gln). The polypeptide is Aspartyl/glutamyl-tRNA(Asn/Gln) amidotransferase subunit B (Chlamydia abortus (strain DSM 27085 / S26/3) (Chlamydophila abortus)).